A 448-amino-acid chain; its full sequence is Selenide, water dikinase 2 (448 aa).

An N-acetylalanine modification is found at Ala-2. Ser-46 carries the phosphoserine modification. The active site involves Sec-60. A non-standard amino acid (selenocysteine) is located at residue Sec-60. Lys-63 serves as a coordination point for ATP. Residues 85-107 (LGRGLVGGQEEASQEAGLPAGAG) form a disordered region. Ser-97 is modified (phosphoserine). Residues 118 to 120 (GMD), Asp-138, Asp-161, and 212 to 215 (GGQT) each bind ATP. Asp-120 is a Mg(2+) binding site. Asp-161 is a binding site for Mg(2+). Asp-316 is a Mg(2+) binding site.

Belongs to the selenophosphate synthase 1 family. Class I subfamily. As to quaternary structure, homodimer. Mg(2+) serves as cofactor. Post-translationally, truncated SEPHS2 proteins produced by failed UGA/Sec decoding are ubiquitinated by the CRL2(KLHDC3) complex, which recognizes the glycine (Gly) at the C-terminus of truncated SEPHS2 proteins.

It catalyses the reaction hydrogenselenide + ATP + H2O = selenophosphate + AMP + phosphate + 2 H(+). In terms of biological role, synthesizes selenophosphate from selenide and ATP. This Homo sapiens (Human) protein is Selenide, water dikinase 2 (SEPHS2).